The following is a 428-amino-acid chain: 4-hydroxy-3-methylbut-2-en-1-yl diphosphate synthase (flavodoxin) (428 aa).

[4Fe-4S] cluster-binding residues include Cys315, Cys318, Cys361, and Glu368.

It belongs to the IspG family. Requires [4Fe-4S] cluster as cofactor.

It catalyses the reaction (2E)-4-hydroxy-3-methylbut-2-enyl diphosphate + oxidized [flavodoxin] + H2O + 2 H(+) = 2-C-methyl-D-erythritol 2,4-cyclic diphosphate + reduced [flavodoxin]. It participates in isoprenoid biosynthesis; isopentenyl diphosphate biosynthesis via DXP pathway; isopentenyl diphosphate from 1-deoxy-D-xylulose 5-phosphate: step 5/6. Converts 2C-methyl-D-erythritol 2,4-cyclodiphosphate (ME-2,4cPP) into 1-hydroxy-2-methyl-2-(E)-butenyl 4-diphosphate. The polypeptide is 4-hydroxy-3-methylbut-2-en-1-yl diphosphate synthase (flavodoxin) (Ralstonia pickettii (strain 12J)).